Reading from the N-terminus, the 238-residue chain is SPEG neighbor protein (238 aa).

Positions 29 to 55 constitute an IQ domain; that stretch reads QSAAIRIQASYRGHRSRKELREKGPPR. Ig-like domains lie at 54-143 and 147-236; these read PRVL…ARIL and PTKI…ARVD.

The protein is SPEG neighbor protein of Homo sapiens (Human).